Reading from the N-terminus, the 609-residue chain is UvrABC system protein C (609 aa).

Positions serine 16–valine 94 constitute a GIY-YIG domain. Residues lysine 203–valine 238 form the UVR domain.

The protein belongs to the UvrC family. Interacts with UvrB in an incision complex.

The protein resides in the cytoplasm. Its function is as follows. The UvrABC repair system catalyzes the recognition and processing of DNA lesions. UvrC both incises the 5' and 3' sides of the lesion. The N-terminal half is responsible for the 3' incision and the C-terminal half is responsible for the 5' incision. In Shewanella sp. (strain MR-4), this protein is UvrABC system protein C.